We begin with the raw amino-acid sequence, 149 residues long: Transcriptional repressor NrdR (149 aa).

A zinc finger lies at C3–C34. Positions P49–E139 constitute an ATP-cone domain.

This sequence belongs to the NrdR family. It depends on Zn(2+) as a cofactor.

Functionally, negatively regulates transcription of bacterial ribonucleotide reductase nrd genes and operons by binding to NrdR-boxes. The protein is Transcriptional repressor NrdR of Shewanella piezotolerans (strain WP3 / JCM 13877).